A 245-amino-acid polypeptide reads, in one-letter code: Triosephosphate isomerase (245 aa).

9–11 (NWK) contacts substrate. H92 (electrophile) is an active-site residue. The Proton acceptor role is filled by E164. Substrate contacts are provided by residues G170, S209, and 230-231 (GG).

This sequence belongs to the triosephosphate isomerase family. In terms of assembly, homodimer.

The protein localises to the cytoplasm. It carries out the reaction D-glyceraldehyde 3-phosphate = dihydroxyacetone phosphate. It participates in carbohydrate biosynthesis; gluconeogenesis. The protein operates within carbohydrate degradation; glycolysis; D-glyceraldehyde 3-phosphate from glycerone phosphate: step 1/1. Functionally, involved in the gluconeogenesis. Catalyzes stereospecifically the conversion of dihydroxyacetone phosphate (DHAP) to D-glyceraldehyde-3-phosphate (G3P). The protein is Triosephosphate isomerase of Cupriavidus necator (strain ATCC 17699 / DSM 428 / KCTC 22496 / NCIMB 10442 / H16 / Stanier 337) (Ralstonia eutropha).